A 424-amino-acid chain; its full sequence is Tyrosine--tRNA ligase (424 aa).

Y37 is an L-tyrosine binding site. Residues 42–51 (ITADSLHVGH) carry the 'HIGH' region motif. The L-tyrosine site is built by Y175 and Q179. A 'KMSKS' region motif is present at residues 235-239 (KFGKT). K238 contributes to the ATP binding site. Positions 356–414 (GNLQQLLVYSRLALSRSHAKSMIVSNSVRINNIIQNNPFYILCNRDKMYHKYTLLSRGK) constitute an S4 RNA-binding domain.

The protein belongs to the class-I aminoacyl-tRNA synthetase family. TyrS type 1 subfamily. As to quaternary structure, homodimer.

The protein resides in the cytoplasm. The enzyme catalyses tRNA(Tyr) + L-tyrosine + ATP = L-tyrosyl-tRNA(Tyr) + AMP + diphosphate + H(+). Functionally, catalyzes the attachment of tyrosine to tRNA(Tyr) in a two-step reaction: tyrosine is first activated by ATP to form Tyr-AMP and then transferred to the acceptor end of tRNA(Tyr). The polypeptide is Tyrosine--tRNA ligase (Buchnera aphidicola subsp. Baizongia pistaciae (strain Bp)).